A 318-amino-acid polypeptide reads, in one-letter code: Methionyl-tRNA formyltransferase (318 aa).

112–115 is a (6S)-5,6,7,8-tetrahydrofolate binding site; sequence SILP.

This sequence belongs to the Fmt family.

The catalysed reaction is L-methionyl-tRNA(fMet) + (6R)-10-formyltetrahydrofolate = N-formyl-L-methionyl-tRNA(fMet) + (6S)-5,6,7,8-tetrahydrofolate + H(+). Functionally, attaches a formyl group to the free amino group of methionyl-tRNA(fMet). The formyl group appears to play a dual role in the initiator identity of N-formylmethionyl-tRNA by promoting its recognition by IF2 and preventing the misappropriation of this tRNA by the elongation apparatus. The polypeptide is Methionyl-tRNA formyltransferase (Shewanella sp. (strain ANA-3)).